A 275-amino-acid chain; its full sequence is MSNRQAEIAAALDVVPPFADDAALVAEIERRKTFIKNTLKQSGLKVLVLGISGGVDSTTAGRLAQLSVEELRAETGDTDYRFIAVRLPHNTQHDEHDAQDSLKFVNADEEATVNIAASVIGLSEQVSHLQQLSDARRDFVIGNVKARIRMVAQFTIANANNGLVIGTDHAAEAVMGFFTKFGDGACDLAPLSGLVKHQVRAIAAHLGAPQHLVQKTPTADLEELRPGKPDEEAHGVTYAEIDAFLHGQNVSDEAYATIVRTYDATRHKRELPLVP.

Position 50 to 57 (Gly-50 to Ser-57) interacts with ATP. Residue Asp-56 coordinates Mg(2+). Deamido-NAD(+) is bound at residue Arg-147. Thr-167 serves as a coordination point for ATP. Glu-172 is a Mg(2+) binding site. Deamido-NAD(+)-binding residues include Lys-180 and Asp-187. Positions 196 and 218 each coordinate ATP. Residue His-267–Lys-268 participates in deamido-NAD(+) binding.

Belongs to the NAD synthetase family. Homodimer.

It catalyses the reaction deamido-NAD(+) + NH4(+) + ATP = AMP + diphosphate + NAD(+) + H(+). Its pathway is cofactor biosynthesis; NAD(+) biosynthesis; NAD(+) from deamido-NAD(+) (ammonia route): step 1/1. Functionally, catalyzes the ATP-dependent amidation of deamido-NAD to form NAD. Uses ammonia as a nitrogen source. This chain is NH(3)-dependent NAD(+) synthetase, found in Ectopseudomonas mendocina (strain ymp) (Pseudomonas mendocina).